The chain runs to 229 residues: Peptidase E (229 aa).

Active-site charge relay system residues include S120, D135, and H157.

The protein belongs to the peptidase S51 family.

It is found in the cytoplasm. The catalysed reaction is Dipeptidase E catalyzes the hydrolysis of dipeptides Asp-|-Xaa. It does not act on peptides with N-terminal Glu, Asn or Gln, nor does it cleave isoaspartyl peptides.. In terms of biological role, hydrolyzes dipeptides containing N-terminal aspartate residues. May play a role in allowing the cell to use peptide aspartate to spare carbon otherwise required for the synthesis of the aspartate family of amino acids. In Salmonella paratyphi A (strain AKU_12601), this protein is Peptidase E.